Here is a 194-residue protein sequence, read N- to C-terminus: MHQIYSSDVSSITSKSSIAKAEIITMEEEQQRQSCCTWFHSLKVQIWIAWLGVSAGVMAGTVFAIQYQNWIAVTMCFISSGFATLVLHLHLAYKKTQMAGWSETRLRCLAAVGATVSFLSFIAMVFCLVVAGIEHQTLDKQGLMGANLWIAAVWFFMTSKWSALTWRFARKYRAFCEESQPLLAAAPPEYSVTI.

A run of 4 helical transmembrane segments spans residues 45-65 (QIWIAWLGVSAGVMAGTVFAI), 71-91 (IAVTMCFISSGFATLVLHLHL), 113-133 (GATVSFLSFIAMVFCLVVAGI), and 143-163 (LMGANLWIAAVWFFMTSKWSA). Residues 182-183 (LL) carry the Di-leucine motif motif.

The protein belongs to the HRG family. In terms of tissue distribution, specifically expressed in the intestinal cells in larvae and adults.

The protein resides in the endosome membrane. Its subcellular location is the lysosome membrane. Heme transporter that regulates intracellular heme availability through the endosomal or lysosomal compartment. The polypeptide is Heme transporter hrg-1 (hrg-1) (Caenorhabditis elegans).